We begin with the raw amino-acid sequence, 950 residues long: Kinase suppressor of Ras 2 (950 aa).

The disordered stretch occupies residues 239 to 296 (PPLESGHRSLPPSPRQRHAVRTPPRTPNIVTTVTPPGTPPMRKKNKLKPPGTPPPSSR). Positions 259–273 (RTPPRTPNIVTTVTP) are enriched in low complexity. Phosphothreonine is present on residues Thr272 and Thr276. The Phorbol-ester/DAG-type zinc finger occupies 412–456 (KHRFSTKYWMSQTCTVCGKGMLFGLKCKNCKLKCHNKCTKEAPPC). Zn(2+)-binding residues include His413, Cys425, Cys428, Cys438, Cys441, His446, Cys449, and Cys456. A Phosphoserine; by MARK3 modification is found at Ser474. A Phosphothreonine modification is found at Thr497. Positions 498–556 (LPKTNKINKDHIPVPYQPDSSSNPSSTTSSTPSSPAPPLPPSATPPSPLHPSPQCTRQQ) are disordered. Positions 517 to 530 (SSSNPSSTTSSTPS) are enriched in low complexity. A compositionally biased stretch (pro residues) spans 531–548 (SPAPPLPPSATPPSPLHP). In terms of domain architecture, Protein kinase spans 666-931 (LEIGELIGKG…TKLMDMLEKL (266 aa)). 672 to 680 (IGKGRFGQV) contacts ATP. Asp786 (proton donor/acceptor) is an active-site residue. ATP-binding residues include Lys788 and Asp803.

Belongs to the protein kinase superfamily. TKL Ser/Thr protein kinase family. Heterodimerizes (via N-terminus) with BRAF (via N-terminus) in a MAP2K1/MEK1-dependent manner. Interacts with BRAF; this increases the low intrinsic protein kinase activity of KSR2. Interacts with MAP2K1, forming a heterodimer that can dimerize to form a heterotetramer. Interacts with MAP3K8, MAPK, RAS and RAF. In terms of processing, phosphorylated on Ser-474 by MARK3. Mainly expressed in brain and kidney.

The protein localises to the cytoplasm. Its subcellular location is the membrane. It catalyses the reaction L-seryl-[protein] + ATP = O-phospho-L-seryl-[protein] + ADP + H(+). The enzyme catalyses L-threonyl-[protein] + ATP = O-phospho-L-threonyl-[protein] + ADP + H(+). With respect to regulation, kinase activity is inhibited by ASC24. In terms of biological role, location-regulated scaffold connecting MEK to RAF. Has very low protein kinase activity and can phosphorylate MAP2K1 at several Ser and Thr residues with very low efficiency (in vitro). Acts as MAP2K1/MEK1-dependent allosteric activator of BRAF; upon binding to MAP2K1/MEK1, dimerizes with BRAF and promotes BRAF-mediated phosphorylation of MAP2K1/MEK1. Interaction with BRAF enhances KSR2-mediated phosphorylation of MAP2K1 (in vitro). Blocks MAP3K8 kinase activity and MAP3K8-mediated signaling. Acts as a negative regulator of MAP3K3-mediated activation of ERK, JNK and NF-kappa-B pathways, inhibiting MAP3K3-mediated interleukin-8 production. This Homo sapiens (Human) protein is Kinase suppressor of Ras 2.